Reading from the N-terminus, the 185-residue chain is MKTAQELRVGNVVMIGNDAWVVSKTEYNKSGRNAAVVKMKLKNLLNGGGQESVYKADDKFEVVVLDRKEVTYSYFADPMYVFMDADYNQYEVEAEMMGDALNYLEDGMACEVVFYNEKAISVELPTILVREITYTEPAVKGDTSSGKVLKNAKLATGFELQVPLFCNTGDKIEIDTRTNEYRSRA.

Belongs to the elongation factor P family.

The protein resides in the cytoplasm. It functions in the pathway protein biosynthesis; polypeptide chain elongation. Involved in peptide bond synthesis. Stimulates efficient translation and peptide-bond synthesis on native or reconstituted 70S ribosomes in vitro. Probably functions indirectly by altering the affinity of the ribosome for aminoacyl-tRNA, thus increasing their reactivity as acceptors for peptidyl transferase. This Burkholderia mallei (strain NCTC 10247) protein is Elongation factor P.